The chain runs to 578 residues: Putative fatty-acid--CoA ligase fadD21 (578 aa).

Belongs to the ATP-dependent AMP-binding enzyme family.

The sequence is that of Putative fatty-acid--CoA ligase fadD21 (fadD21) from Mycobacterium bovis (strain ATCC BAA-935 / AF2122/97).